Here is a 378-residue protein sequence, read N- to C-terminus: Enoyl-[acyl-carrier-protein] reductase 1, mitochondrial (378 aa).

The Proton donor role is filled by Tyr-59. NADP(+) contacts are provided by residues Asn-151, 180–183 (NSQV), 203–206 (RDGK), 284–287 (YGGM), 309–311 (YWL), and Lys-372.

The protein belongs to the zinc-containing alcohol dehydrogenase family. Quinone oxidoreductase subfamily. As to quaternary structure, homodimer.

The protein localises to the mitochondrion matrix. It carries out the reaction a 2,3-saturated acyl-[ACP] + NADP(+) = a (2E)-enoyl-[ACP] + NADPH + H(+). Functionally, catalyzes the NADPH-dependent reduction of trans-2-enoyl thioesters in mitochondrial fatty acid synthesis (fatty acid synthesis type II). Fatty acid chain elongation in mitochondria uses acyl carrier protein (ACP) as an acyl group carrier, but the enzyme accepts both ACP and CoA thioesters as substrates in vitro. Required for respiration and the maintenance of the mitochondrial compartment. This chain is Enoyl-[acyl-carrier-protein] reductase 1, mitochondrial (ETR1), found in Debaryomyces hansenii (strain ATCC 36239 / CBS 767 / BCRC 21394 / JCM 1990 / NBRC 0083 / IGC 2968) (Yeast).